A 379-amino-acid polypeptide reads, in one-letter code: UDP-4-amino-4-deoxy-L-arabinose--oxoglutarate aminotransferase (379 aa).

The residue at position 182 (K182) is an N6-(pyridoxal phosphate)lysine.

Belongs to the DegT/DnrJ/EryC1 family. ArnB subfamily. In terms of assembly, homodimer. Pyridoxal 5'-phosphate serves as cofactor.

It carries out the reaction UDP-4-amino-4-deoxy-beta-L-arabinose + 2-oxoglutarate = UDP-beta-L-threo-pentopyranos-4-ulose + L-glutamate. Its pathway is nucleotide-sugar biosynthesis; UDP-4-deoxy-4-formamido-beta-L-arabinose biosynthesis; UDP-4-deoxy-4-formamido-beta-L-arabinose from UDP-alpha-D-glucuronate: step 2/3. It participates in bacterial outer membrane biogenesis; lipopolysaccharide biosynthesis. Functionally, catalyzes the conversion of UDP-4-keto-arabinose (UDP-Ara4O) to UDP-4-amino-4-deoxy-L-arabinose (UDP-L-Ara4N). The modified arabinose is attached to lipid A and is required for resistance to polymyxin and cationic antimicrobial peptides. The protein is UDP-4-amino-4-deoxy-L-arabinose--oxoglutarate aminotransferase of Erwinia tasmaniensis (strain DSM 17950 / CFBP 7177 / CIP 109463 / NCPPB 4357 / Et1/99).